The chain runs to 312 residues: MTHPLHIAVLMGGWSSEREVSLTSGNGVADALESLGHKVTRIDMDRDVALRLAEAKPDVVFNALHGTPGEDGTVQGMMDLMGLTYTHSGLTTSVIAIDKELTKQQLVPHGIRMPEGIIVESESLHAGDPMPRPYVLKPVNEGSSVGVAIIKERDNHGVPIHRDSHGPWQTFATLLAEPFIRGRELTVAVLGNRALGVTELVPSSGFYDYEAKYTDGLTTHICPADVPADIAEAAMRMALDAHRLLGCKGTSRSDFRWDDERGEAGLYLLEVNTQPGMTPLSLVPEQARHVGLTYADLVQAIVDEALAGKAAR.

Positions 103–303 constitute an ATP-grasp domain; sequence KQQLVPHGIR…YADLVQAIVD (201 aa). An ATP-binding site is contributed by 130-186; it reads MPRPYVLKPVNEGSSVGVAIIKERDNHGVPIHRDSHGPWQTFATLLAEPFIRGRELT. 3 residues coordinate Mg(2+): D254, E270, and N272.

This sequence belongs to the D-alanine--D-alanine ligase family. The cofactor is Mg(2+). Mn(2+) serves as cofactor.

The protein localises to the cytoplasm. It catalyses the reaction 2 D-alanine + ATP = D-alanyl-D-alanine + ADP + phosphate + H(+). Its pathway is cell wall biogenesis; peptidoglycan biosynthesis. Functionally, cell wall formation. In Rhizorhabdus wittichii (strain DSM 6014 / CCUG 31198 / JCM 15750 / NBRC 105917 / EY 4224 / RW1) (Sphingomonas wittichii), this protein is D-alanine--D-alanine ligase.